The following is a 250-amino-acid chain: MKKPLFFIASACVTIYILFALSPSVYAMHIMEGFLPWQWALVWWLLFLPFFLVGMRNVARLMRQRPEVKLLLALATAFTFVLSALKIPSVTGSSSHPTGTGLGALLFGPFVMTVIGTAVLLFQALLLAHGGVTTLGANAFSMAVVGPLVAYVLFSLCKKFGVSTRVSVFLAAMMADLATYVMTSIQLALAFPDATSGVWGAFLKFASIFAVTQIPLAITEGLLTVVVWNFLHTYSKRELTILQQKGATIE.

The first 27 residues, 1–27 (MKKPLFFIASACVTIYILFALSPSVYA), serve as a signal peptide directing secretion. The next 6 helical transmembrane spans lie at 33-53 (GFLPWQWALVWWLLFLPFFLV), 70-90 (LLLALATAFTFVLSALKIPSV), 102-122 (LGALLFGPFVMTVIGTAVLLF), 134-154 (TLGANAFSMAVVGPLVAYVLF), 168-188 (VFLAAMMADLATYVMTSIQLA), and 208-228 (IFAVTQIPLAITEGLLTVVVW).

The protein belongs to the CbiM family. As to quaternary structure, forms an energy-coupling factor (ECF) transporter complex composed of an ATP-binding protein (A component, CbiO), a transmembrane protein (T component, CbiQ) and 2 possible substrate-capture proteins (S components, CbiM and CbiN) of unknown stoichimetry.

Its subcellular location is the cell membrane. It participates in cofactor biosynthesis; adenosylcobalamin biosynthesis. In terms of biological role, part of the energy-coupling factor (ECF) transporter complex CbiMNOQ involved in cobalt import. The protein is Cobalt transport protein CbiM of Anoxybacillus flavithermus (strain DSM 21510 / WK1).